Consider the following 585-residue polypeptide: Rhizobactin siderophore biosynthesis protein RhbC (585 aa).

The protein belongs to the IucA/IucC family.

It functions in the pathway siderophore biosynthesis; rhizobactin biosynthesis. This chain is Rhizobactin siderophore biosynthesis protein RhbC (rhbC), found in Rhizobium meliloti (strain 1021) (Ensifer meliloti).